We begin with the raw amino-acid sequence, 208 residues long: N-(5'-phosphoribosyl)anthranilate isomerase (208 aa).

This sequence belongs to the TrpF family.

The catalysed reaction is N-(5-phospho-beta-D-ribosyl)anthranilate = 1-(2-carboxyphenylamino)-1-deoxy-D-ribulose 5-phosphate. Its pathway is amino-acid biosynthesis; L-tryptophan biosynthesis; L-tryptophan from chorismate: step 3/5. The polypeptide is N-(5'-phosphoribosyl)anthranilate isomerase (Neisseria gonorrhoeae (strain ATCC 700825 / FA 1090)).